A 129-amino-acid chain; its full sequence is UPF0325 protein HCH_00487 (129 aa).

The protein belongs to the UPF0325 family.

In Hahella chejuensis (strain KCTC 2396), this protein is UPF0325 protein HCH_00487.